The chain runs to 403 residues: Probable tRNA sulfurtransferase (403 aa).

The region spanning 60–165 (QLAEERLKPI…KEGVFLSCRT (106 aa)) is the THUMP domain. ATP contacts are provided by residues 183 to 184 (ML), 208 to 209 (HF), Arg-265, Gly-287, and Gln-296.

This sequence belongs to the ThiI family.

It localises to the cytoplasm. The catalysed reaction is [ThiI sulfur-carrier protein]-S-sulfanyl-L-cysteine + a uridine in tRNA + 2 reduced [2Fe-2S]-[ferredoxin] + ATP + H(+) = [ThiI sulfur-carrier protein]-L-cysteine + a 4-thiouridine in tRNA + 2 oxidized [2Fe-2S]-[ferredoxin] + AMP + diphosphate. The enzyme catalyses [ThiS sulfur-carrier protein]-C-terminal Gly-Gly-AMP + S-sulfanyl-L-cysteinyl-[cysteine desulfurase] + AH2 = [ThiS sulfur-carrier protein]-C-terminal-Gly-aminoethanethioate + L-cysteinyl-[cysteine desulfurase] + A + AMP + 2 H(+). Its pathway is cofactor biosynthesis; thiamine diphosphate biosynthesis. Its function is as follows. Catalyzes the ATP-dependent transfer of a sulfur to tRNA to produce 4-thiouridine in position 8 of tRNAs, which functions as a near-UV photosensor. Also catalyzes the transfer of sulfur to the sulfur carrier protein ThiS, forming ThiS-thiocarboxylate. This is a step in the synthesis of thiazole, in the thiamine biosynthesis pathway. The sulfur is donated as persulfide by IscS. In Listeria monocytogenes serovar 1/2a (strain ATCC BAA-679 / EGD-e), this protein is Probable tRNA sulfurtransferase.